We begin with the raw amino-acid sequence, 629 residues long: DNA-directed RNA polymerase III subunit rpc3 (629 aa).

3 disordered regions span residues 136 to 164 (ANGVPEEHGEHEEDEEQSNGLNGEHSNEQ), 247 to 294 (PRGA…EMGY), and 373 to 420 (QLDL…SGGN). Residues 257–268 (RRADEPNKKCRT) are compositionally biased toward basic and acidic residues. Positions 272-293 (SVDENDEHDEEEENEWSDDEMG) are enriched in acidic residues. Over residues 374 to 388 (LDLSSSTGPMDSSQP) the composition is skewed to polar residues. Over residues 389–409 (DGRRGKRPWDGDVEGTNHEEA) the composition is skewed to basic and acidic residues. Positions 556–577 (TYKAMSRCLQRLRFERSRIKDF) are leucine-zipper.

The protein belongs to the RNA polymerase beta chain family. Component of the RNA polymerase III (Pol III) complex consisting of 17 subunits.

Its subcellular location is the nucleus. In terms of biological role, DNA-dependent RNA polymerase catalyzes the transcription of DNA into RNA using the four ribonucleoside triphosphates as substrates. Specific core component of RNA polymerase III which synthesizes small RNAs, such as 5S rRNA and tRNAs. The chain is DNA-directed RNA polymerase III subunit rpc3 (rpc82) from Aspergillus fumigatus (strain ATCC MYA-4609 / CBS 101355 / FGSC A1100 / Af293) (Neosartorya fumigata).